The primary structure comprises 60 residues: UPF0434 protein KPN78578_09190 (60 aa).

It belongs to the UPF0434 family.

The polypeptide is UPF0434 protein KPN78578_09190 (Klebsiella pneumoniae subsp. pneumoniae (strain ATCC 700721 / MGH 78578)).